A 488-amino-acid polypeptide reads, in one-letter code: Splicing factor U2AF 65 kDa subunit (488 aa).

Composition is skewed to basic and acidic residues over residues 25–55 (LESL…DEDR) and 78–129 (DRRD…KYRF). Positions 25 to 133 (LESLQEDVKP…PKKYRFWDVP (109 aa)) are disordered. 3 RRM domains span residues 175–257 (RRLY…RPRD), 282–359 (NKIF…LACA), and 389–479 (EILC…YYDV).

Belongs to the splicing factor SR family. Forms a heterodimer with the U2AF small subunit.

It is found in the nucleus. In terms of biological role, necessary for the splicing of pre-mRNA. Binds to the polypyrimidine tract of introns early during spliceosome assembly. This Caenorhabditis briggsae protein is Splicing factor U2AF 65 kDa subunit (uaf-1).